Consider the following 86-residue polypeptide: Large ribosomal subunit protein bL27 (86 aa).

Over residues 1–10 (MAQKKGGGST) the composition is skewed to gly residues. The segment at 1 to 20 (MAQKKGGGSTRNGRDSESKR) is disordered.

Belongs to the bacterial ribosomal protein bL27 family.

The chain is Large ribosomal subunit protein bL27 from Polynucleobacter necessarius subsp. necessarius (strain STIR1).